A 295-amino-acid polypeptide reads, in one-letter code: MAVFSSLTPVFVAVLCVIIGFLFKNSQRKESRSKQKPSDQTARPWVDEDLQDDTEISTKDNEENNEDWMDTTDEENLPHVPYSPVQYSVSEMLDRSERFYTLMNLRRSVRFISPEPVPKEVIDNVIRTAGTAPSGAHTEPWTFVVVSDTDVKHRIREIIEEEEEINYKQRMGNKWVQDLKRLRTNWVKEYLDVAPYLILVFKQAYGILPSGKKKTHYYNEISVSISCGILLAALQNAGLVTVTTTPLNCGPQLRSLLQRPANEKLLMLLPVGFPASDAKVPDLKRKDLNDIMVLV.

Residues 3–23 (VFSSLTPVFVAVLCVIIGFLF) form a helical membrane-spanning segment. A disordered region spans residues 29–81 (KESRSKQKPSDQTARPWVDEDLQDDTEISTKDNEENNEDWMDTTDEENLPHVP). Positions 63 to 75 (ENNEDWMDTTDEE) are enriched in acidic residues. FMN-binding positions include 106 to 110 (RRSVR), serine 134, and 134 to 135 (SG). 4 residues coordinate 3-iodo-L-tyrosine: alanine 136, glutamate 163, tyrosine 167, and lysine 188. FMN-binding positions include 243–245 (TTT) and arginine 285.

Belongs to the nitroreductase family. It depends on FMN as a cofactor.

The protein resides in the membrane. The enzyme catalyses 2 iodide + L-tyrosine + 2 NADP(+) = 3,5-diiodo-L-tyrosine + 2 NADPH + H(+). It carries out the reaction iodide + L-tyrosine + NADP(+) = 3-iodo-L-tyrosine + NADPH. The catalysed reaction is 3-iodo-L-tyrosine + iodide + NADP(+) = 3,5-diiodo-L-tyrosine + NADPH + H(+). It catalyses the reaction L-tyrosine + chloride + NADP(+) = 3-chloro-L-tyrosine + NADPH. The enzyme catalyses bromide + L-tyrosine + NADP(+) = 3-bromo-L-tyrosine + NADPH. Its function is as follows. Catalyzes the dehalogenation of halotyrosines such as 3,5-diiodo-L-tyrosine. Likely to also catalyze the dehalogenation of other halotyrosines such as 3-bromo-L-tyrosine, 3-chloro-L-tyrosine and 3-iodo-L-tyrosine. The protein is Iodotyrosine deiodinase (iyd) of Danio rerio (Zebrafish).